Here is a 34-residue protein sequence, read N- to C-terminus: Photosystem II reaction center protein Psb30 (34 aa).

A helical transmembrane segment spans residues 6 to 26; that stretch reads VIGQLVSTGAIMLLGPAIIIL.

The protein belongs to the Psb30/Ycf12 family. In terms of assembly, PSII is composed of 1 copy each of membrane proteins PsbA, PsbB, PsbC, PsbD, PsbE, PsbF, PsbH, PsbI, PsbJ, PsbK, PsbL, PsbM, PsbT, PsbX, PsbY, PsbZ, Psb30/Ycf12, peripheral proteins of the oxygen-evolving complex and a large number of cofactors. It forms dimeric complexes.

It localises to the plastid. The protein resides in the chloroplast thylakoid membrane. Functionally, a core subunit of photosystem II (PSII), probably helps stabilize the reaction center. This chain is Photosystem II reaction center protein Psb30, found in Thalassiosira pseudonana (Marine diatom).